Consider the following 158-residue polypeptide: Rhombotin-2 (158 aa).

LIM zinc-binding domains follow at residues 30–89 (CGGC…RLFG) and 94–153 (CASC…EWTK).

In terms of assembly, interacts via its LIM domains with ELF2 and LDB1. Interacts with BEX2 and KDM5A. Also interacts with basic helix-loop-helix protein TAL1/SCL and can assemble in a complex with LMO2 and TAL1/SCL.

It is found in the nucleus. In terms of biological role, acts with TAL1/SCL to regulate red blood cell development. Also acts with LDB1 to maintain erythroid precursors in an immature state. The protein is Rhombotin-2 (LMO2) of Bos taurus (Bovine).